The following is a 156-amino-acid chain: Transcription elongation factor GreA (156 aa).

The stretch at Met-1–Arg-32 forms a coiled coil.

Belongs to the GreA/GreB family.

Its function is as follows. Necessary for efficient RNA polymerase transcription elongation past template-encoded arresting sites. The arresting sites in DNA have the property of trapping a certain fraction of elongating RNA polymerases that pass through, resulting in locked ternary complexes. Cleavage of the nascent transcript by cleavage factors such as GreA or GreB allows the resumption of elongation from the new 3'terminus. GreA releases sequences of 2 to 3 nucleotides. This Thermotoga petrophila (strain ATCC BAA-488 / DSM 13995 / JCM 10881 / RKU-1) protein is Transcription elongation factor GreA.